The chain runs to 467 residues: Asparagine--tRNA ligase (467 aa).

This sequence belongs to the class-II aminoacyl-tRNA synthetase family. In terms of assembly, homodimer.

It localises to the cytoplasm. It carries out the reaction tRNA(Asn) + L-asparagine + ATP = L-asparaginyl-tRNA(Asn) + AMP + diphosphate + H(+). The chain is Asparagine--tRNA ligase from Haemophilus influenzae (strain PittEE).